A 92-amino-acid polypeptide reads, in one-letter code: Small ribosomal subunit protein uS19 (92 aa).

The protein belongs to the universal ribosomal protein uS19 family.

In terms of biological role, protein S19 forms a complex with S13 that binds strongly to the 16S ribosomal RNA. The polypeptide is Small ribosomal subunit protein uS19 (Shigella boydii serotype 18 (strain CDC 3083-94 / BS512)).